The chain runs to 46 residues: uncharacterized protein (46 aa).

This is an uncharacterized protein from Bacillus subtilis (strain 168).